A 226-amino-acid chain; its full sequence is Ribose-5-phosphate isomerase A (226 aa).

Residues 28 to 31 (TGST), 80 to 83 (DGAD), and 93 to 96 (KGGG) each bind substrate. E102 acts as the Proton acceptor in catalysis. K120 lines the substrate pocket.

Belongs to the ribose 5-phosphate isomerase family. In terms of assembly, homodimer.

The catalysed reaction is aldehydo-D-ribose 5-phosphate = D-ribulose 5-phosphate. The protein operates within carbohydrate degradation; pentose phosphate pathway; D-ribose 5-phosphate from D-ribulose 5-phosphate (non-oxidative stage): step 1/1. Catalyzes the reversible conversion of ribose-5-phosphate to ribulose 5-phosphate. This Caulobacter sp. (strain K31) protein is Ribose-5-phosphate isomerase A.